Here is an 81-residue protein sequence, read N- to C-terminus: Acyl carrier protein (81 aa).

In terms of domain architecture, Carrier spans 1 to 79 (MDREEILQKI…EAVDYVVEHQ (79 aa)). S39 carries the O-(pantetheine 4'-phosphoryl)serine modification.

This sequence belongs to the acyl carrier protein (ACP) family. Post-translationally, 4'-phosphopantetheine is transferred from CoA to a specific serine of apo-ACP by AcpS. This modification is essential for activity because fatty acids are bound in thioester linkage to the sulfhydryl of the prosthetic group.

The protein resides in the cytoplasm. It functions in the pathway lipid metabolism; fatty acid biosynthesis. Its function is as follows. Carrier of the growing fatty acid chain in fatty acid biosynthesis. The sequence is that of Acyl carrier protein from Rubrobacter xylanophilus (strain DSM 9941 / JCM 11954 / NBRC 16129 / PRD-1).